The sequence spans 1196 residues: DNA-directed RNA polymerase subunit beta (1196 aa).

It belongs to the RNA polymerase beta chain family. The RNAP catalytic core consists of 2 alpha, 1 beta, 1 beta' and 1 omega subunit. When a sigma factor is associated with the core the holoenzyme is formed, which can initiate transcription.

It catalyses the reaction RNA(n) + a ribonucleoside 5'-triphosphate = RNA(n+1) + diphosphate. Its function is as follows. DNA-dependent RNA polymerase catalyzes the transcription of DNA into RNA using the four ribonucleoside triphosphates as substrates. The sequence is that of DNA-directed RNA polymerase subunit beta from Lactococcus lactis subsp. cremoris (strain SK11).